The sequence spans 348 residues: Dihydroorotase (348 aa).

2 residues coordinate Zn(2+): histidine 17 and histidine 19. Residues 19-21 (HLR) and asparagine 45 contribute to the substrate site. Residues lysine 103, histidine 140, and histidine 178 each coordinate Zn(2+). Position 103 is an N6-carboxylysine (lysine 103). Residue histidine 140 participates in substrate binding. Leucine 223 serves as a coordination point for substrate. Aspartate 251 serves as a coordination point for Zn(2+). Aspartate 251 is a catalytic residue. Residues histidine 255 and alanine 267 each contribute to the substrate site.

This sequence belongs to the metallo-dependent hydrolases superfamily. DHOase family. Class II DHOase subfamily. As to quaternary structure, homodimer. It depends on Zn(2+) as a cofactor.

The enzyme catalyses (S)-dihydroorotate + H2O = N-carbamoyl-L-aspartate + H(+). Its pathway is pyrimidine metabolism; UMP biosynthesis via de novo pathway; (S)-dihydroorotate from bicarbonate: step 3/3. Catalyzes the reversible cyclization of carbamoyl aspartate to dihydroorotate. The chain is Dihydroorotase from Salmonella paratyphi A (strain ATCC 9150 / SARB42).